A 70-amino-acid chain; its full sequence is Brevinin-1MT2 (70 aa).

Residues 1 to 22 (MFTLKKSMLLLFFLGTINLSLC) form the signal peptide. Residues 23–44 (EQERNADEEERRDDDEMDVEVE) constitute a propeptide that is removed on maturation. Residues cysteine 64 and cysteine 70 are joined by a disulfide bond.

It belongs to the frog skin active peptide (FSAP) family. Brevinin subfamily. In terms of tissue distribution, expressed by the skin glands.

The protein localises to the secreted. In terms of biological role, antimicrobial peptide with activity against a variety of Gram-negative and Gram-positive bacteria and against fungi. Shows strong hemolytic activity against human erythrocytes. The protein is Brevinin-1MT2 of Amolops mantzorum (Sichuan torrent frog).